Reading from the N-terminus, the 195-residue chain is Orotate phosphoribosyltransferase (195 aa).

5-phospho-alpha-D-ribose 1-diphosphate-binding positions include Arg-86, Lys-90, His-92, and 111-119 (DDVATTGVS). Thr-115 and Arg-143 together coordinate orotate.

The protein belongs to the purine/pyrimidine phosphoribosyltransferase family. PyrE subfamily. As to quaternary structure, homodimer. Mg(2+) serves as cofactor.

The catalysed reaction is orotidine 5'-phosphate + diphosphate = orotate + 5-phospho-alpha-D-ribose 1-diphosphate. Its pathway is pyrimidine metabolism; UMP biosynthesis via de novo pathway; UMP from orotate: step 1/2. In terms of biological role, catalyzes the transfer of a ribosyl phosphate group from 5-phosphoribose 1-diphosphate to orotate, leading to the formation of orotidine monophosphate (OMP). The chain is Orotate phosphoribosyltransferase from Saccharolobus solfataricus (strain ATCC 35092 / DSM 1617 / JCM 11322 / P2) (Sulfolobus solfataricus).